The sequence spans 184 residues: Photosystem I assembly protein Ycf4 (184 aa).

Helical transmembrane passes span Val-20–Ser-42 and Ile-57–Tyr-79.

Belongs to the Ycf4 family.

It localises to the plastid. The protein resides in the chloroplast thylakoid membrane. Its function is as follows. Seems to be required for the assembly of the photosystem I complex. The sequence is that of Photosystem I assembly protein Ycf4 from Adiantum capillus-veneris (Maidenhair fern).